The chain runs to 182 residues: Large ribosomal subunit protein bL25 (182 aa).

The protein belongs to the bacterial ribosomal protein bL25 family. CTC subfamily. In terms of assembly, part of the 50S ribosomal subunit; part of the 5S rRNA/L5/L18/L25 subcomplex. Contacts the 5S rRNA. Binds to the 5S rRNA independently of L5 and L18.

Functionally, this is one of the proteins that binds to the 5S RNA in the ribosome where it forms part of the central protuberance. The sequence is that of Large ribosomal subunit protein bL25 from Borrelia turicatae (strain 91E135).